Reading from the N-terminus, the 108-residue chain is Heme oxygenase (staphylobilin-producing) (108 aa).

An ABM domain is found at 2 to 93; that stretch reads FMAENRLQLQ…DDDGQQSPIL (92 aa). Asn-6 is a Fe cation binding site. Residues 21–28 and His-76 each bind heme; that span reads RFYNRQGI.

It belongs to the antibiotic biosynthesis monooxygenase family. Heme-degrading monooxygenase IsdG subfamily. As to quaternary structure, homodimer.

It is found in the cytoplasm. It catalyses the reaction heme b + 5 AH2 + 4 O2 + 2 H(+) = delta-staphylobilin + Fe(2+) + formaldehyde + 5 A + 4 H2O. The catalysed reaction is heme b + 5 AH2 + 4 O2 + 2 H(+) = beta-staphylobilin + Fe(2+) + formaldehyde + 5 A + 4 H2O. In terms of biological role, allows bacterial pathogens to use the host heme as an iron source. Catalyzes the oxidative degradation of the heme macrocyclic porphyrin ring to the oxo-bilirubin chromophore staphylobilin (a mixture of the linear tetrapyrroles 5-oxo-delta-bilirubin and 15-oxo-beta-bilirubin) in the presence of a suitable electron donor such as ascorbate or NADPH--cytochrome P450 reductase, with subsequent release of free iron. This chain is Heme oxygenase (staphylobilin-producing) (isdI), found in Staphylococcus aureus (strain Mu3 / ATCC 700698).